The primary structure comprises 432 residues: MGFHIYEIKARQIIDSRGNPTVEADVILEDGTLGRAAVPSGASTGTNEAVELRDGDKSVYMGKGVLKAVENIINIISPELEGMSALNQVEIDRKMLELDGTPNKSKLGANAILAVSMATARAAAEHLGLKVYQYLGTYKANILPTPMCNIINGGAHSDNSVDFQEFMIMPIGAKTFSDAIRMSAEVFHTLKSILSKKGYATSVGDEGGFAPNLKSNEEACEVIMEAIKSAGYTPGTDIAIALDPATSELYDPKTKKYVFKWSTKEELTSQEMVEYWAKWVEKYPIISIEDGMAEEDWDGWKKLTDKIGNKIQLVGDDLFVTNTSFLKKGIEMKVANAILIKVNQIGTLTETFEAVEMAKKAGYTAIVSHRSGETEDTTIADLVVALGTGQIKTGSLSRTDRIAKYNQLLRIEEELGSIAEYHGKDVFYSINK.

(2R)-2-phosphoglycerate is bound at residue Q164. E206 acts as the Proton donor in catalysis. 3 residues coordinate Mg(2+): D243, E289, and D316. Residues K341, R370, S371, and K392 each contribute to the (2R)-2-phosphoglycerate site. Catalysis depends on K341, which acts as the Proton acceptor.

It belongs to the enolase family. Mg(2+) serves as cofactor.

It is found in the cytoplasm. It localises to the secreted. Its subcellular location is the cell surface. The catalysed reaction is (2R)-2-phosphoglycerate = phosphoenolpyruvate + H2O. The protein operates within carbohydrate degradation; glycolysis; pyruvate from D-glyceraldehyde 3-phosphate: step 4/5. In terms of biological role, catalyzes the reversible conversion of 2-phosphoglycerate (2-PG) into phosphoenolpyruvate (PEP). It is essential for the degradation of carbohydrates via glycolysis. This chain is Enolase, found in Borrelia duttonii (strain Ly).